Consider the following 391-residue polypeptide: Elongation factor Tu 1 (391 aa).

One can recognise a tr-type G domain in the interval 10 to 201 (KPHVNIGTIG…AVDSYIPTPE (192 aa)). Residues 19–26 (GHVDHGKT) form a G1 region. 19–26 (GHVDHGKT) provides a ligand contact to GTP. Thr-26 lines the Mg(2+) pocket. The interval 55–59 (GITIS) is G2. The interval 76-79 (DCPG) is G3. GTP-binding positions include 76–80 (DCPGH) and 131–134 (NKVD). Residues 131-134 (NKVD) are G4. The segment at 169–171 (SAL) is G5.

This sequence belongs to the TRAFAC class translation factor GTPase superfamily. Classic translation factor GTPase family. EF-Tu/EF-1A subfamily. As to quaternary structure, monomer.

It localises to the cytoplasm. It catalyses the reaction GTP + H2O = GDP + phosphate + H(+). GTP hydrolase that promotes the GTP-dependent binding of aminoacyl-tRNA to the A-site of ribosomes during protein biosynthesis. The polypeptide is Elongation factor Tu 1 (Rhizobium etli (strain ATCC 51251 / DSM 11541 / JCM 21823 / NBRC 15573 / CFN 42)).